The chain runs to 686 residues: Mitochondrial Rho GTPase 1 (686 aa).

The Cytoplasmic portion of the chain corresponds to 1–648 (MPRRDLVRIV…PAQRIRVVAR (648 aa)). In terms of domain architecture, Miro 1 spans 4–172 (RDLVRIVLVG…FYFAQKAVLH (169 aa)). Residues 13 to 20 (GDDGVGKS), 59 to 63 (DTSSN), and 117 to 120 (NKID) contribute to the GTP site. 2 EF-hand domains span residues 188 to 223 (KCLE…CFST) and 341 to 376 (LGNQ…SPGN). Residues Asp201, Asp203, Asp205, Glu212, Asp354, Asp356, Asp358, and Glu365 each contribute to the Ca(2+) site. One can recognise a Miro 2 domain in the interval 455–624 (RNVFLCYVLG…WVAITRVALD (170 aa)). GTP-binding positions include 464 to 471 (GATGSGKT), 506 to 510 (EMEGV), and 574 to 577 (TKSD). A helical; Anchor for type IV membrane protein transmembrane segment spans residues 649–665 (WGLAATTISAIVAVWMK). At 666-686 (WQGYSFKGIWGWMAKFAGLRT) the chain is on the mitochondrial intermembrane side.

The protein belongs to the mitochondrial Rho GTPase family.

The protein resides in the mitochondrion outer membrane. Functionally, mitochondrial GTPase involved in mitochondrial trafficking. Probably involved in control of anterograde transport of mitochondria and their subcellular distribution. This is Mitochondrial Rho GTPase 1 (GEM1) from Cryptococcus neoformans var. neoformans serotype D (strain B-3501A) (Filobasidiella neoformans).